Consider the following 320-residue polypeptide: GPI-specific phospholipase A2-like PGAP3 (320 aa).

An N-terminal signal peptide occupies residues 1-20 (MAGLAARLVLLAGAAALASG). Over 21–98 (SQGDREPVYR…QFHGKWPFSR (78 aa)) the chain is Lumenal. N-linked (GlcNAc...) asparagine glycosylation occurs at Asn-40. A helical membrane pass occupies residues 99–119 (FLFFQEPASAVASFLNGLASL). The Cytoplasmic portion of the chain corresponds to 120–135 (VMLCRYRTFVPASSPM). The chain crosses the membrane as a helical span at residues 136-156 (YHTCVAFAWVSLNAWFWSTVF). Residues 157 to 169 (HTRDTDLTEKMDY) are Lumenal-facing. Residues 170-190 (FCASTVILHSIYLCCVRTVGL) form a helical membrane-spanning segment. Over 191–193 (QHP) the chain is Cytoplasmic. The helical transmembrane segment at 194 to 214 (AVVSAFRALLLLMLTVHVSYL) threads the bilayer. Residues 215-224 (SLIRFDYGYN) are Lumenal-facing. The chain crosses the membrane as a helical span at residues 225-245 (LVANVAIGLVNVVWWLAWCLW). The Cytoplasmic segment spans residues 246–257 (NQRRLPHVRKCV). A helical transmembrane segment spans residues 258–278 (VVVLLLQGLSLLELLDFPPLF). A topological domain (lumenal) is located at residue Trp-279. Residues 280-299 (VLDAHAIWHISTIPVHVLFF) form a helical membrane-spanning segment. At 300-320 (SFLEDDSLYLLKESEDKFKLD) the chain is on the cytoplasmic side.

Belongs to the PGAP3 family. Ubiquitously expressed, with highest levels in thyroid and placenta.

It is found in the golgi apparatus membrane. Functionally, involved in the fatty acid remodeling steps of GPI-anchor maturation where the unsaturated acyl chain at sn-2 of inositol phosphate is replaced by a saturated stearoyl chain. May catalyze the first step of the fatty acid remodeling, by removing the unsaturated acyl chain at sn-2 of inositol phosphate, generating a lyso-GPI intermediate. The fatty acid remodeling steps is critical for the integration of GPI-APs into lipid rafts. This Homo sapiens (Human) protein is GPI-specific phospholipase A2-like PGAP3.